The chain runs to 147 residues: Large ribosomal subunit protein uL11 (147 aa).

This sequence belongs to the universal ribosomal protein uL11 family. As to quaternary structure, part of the ribosomal stalk of the 50S ribosomal subunit. Interacts with L10 and the large rRNA to form the base of the stalk. L10 forms an elongated spine to which L12 dimers bind in a sequential fashion forming a multimeric L10(L12)X complex. In terms of processing, one or more lysine residues are methylated.

In terms of biological role, forms part of the ribosomal stalk which helps the ribosome interact with GTP-bound translation factors. This Cytophaga hutchinsonii (strain ATCC 33406 / DSM 1761 / CIP 103989 / NBRC 15051 / NCIMB 9469 / D465) protein is Large ribosomal subunit protein uL11.